Consider the following 908-residue polypeptide: Protein translocase subunit SecA (908 aa).

Residues Gln-87, 105–109, and Asp-512 each bind ATP; that span reads GEGKT. The tract at residues 876–908 is disordered; it reads QAPMIRDGEKVGRNDPCPCGSGRKYKQCHGKLS. Residues Cys-892, Cys-894, Cys-903, and His-904 each coordinate Zn(2+). Over residues 898-908 the composition is skewed to basic residues; the sequence is RKYKQCHGKLS.

This sequence belongs to the SecA family. Monomer and homodimer. Part of the essential Sec protein translocation apparatus which comprises SecA, SecYEG and auxiliary proteins SecDF-YajC and YidC. The cofactor is Zn(2+).

Its subcellular location is the cell inner membrane. It is found in the cytoplasm. It catalyses the reaction ATP + H2O + cellular proteinSide 1 = ADP + phosphate + cellular proteinSide 2.. Functionally, part of the Sec protein translocase complex. Interacts with the SecYEG preprotein conducting channel. Has a central role in coupling the hydrolysis of ATP to the transfer of proteins into and across the cell membrane, serving both as a receptor for the preprotein-SecB complex and as an ATP-driven molecular motor driving the stepwise translocation of polypeptide chains across the membrane. The chain is Protein translocase subunit SecA from Shewanella baltica (strain OS185).